The primary structure comprises 334 residues: Ferredoxin--NADP reductase (334 aa).

Residues D33, Q41, Y46, A86, F120, D286, and T327 each coordinate FAD.

This sequence belongs to the ferredoxin--NADP reductase type 2 family. In terms of assembly, homodimer. FAD is required as a cofactor.

It catalyses the reaction 2 reduced [2Fe-2S]-[ferredoxin] + NADP(+) + H(+) = 2 oxidized [2Fe-2S]-[ferredoxin] + NADPH. The chain is Ferredoxin--NADP reductase from Rickettsia typhi (strain ATCC VR-144 / Wilmington).